We begin with the raw amino-acid sequence, 334 residues long: Glyceraldehyde-3-phosphate dehydrogenase (334 aa).

NAD(+) contacts are provided by residues 12–13 (TI) and Gly-111. A D-glyceraldehyde 3-phosphate-binding site is contributed by 140-142 (SCN). Cys-141 functions as the Nucleophile in the catalytic mechanism. NAD(+) is bound at residue Arg-167. Residue 192-193 (HG) coordinates D-glyceraldehyde 3-phosphate. Gln-298 contributes to the NAD(+) binding site.

It belongs to the glyceraldehyde-3-phosphate dehydrogenase family. As to quaternary structure, homotetramer.

Its subcellular location is the encapsulin nanocompartment. The enzyme catalyses D-glyceraldehyde 3-phosphate + phosphate + NADP(+) = (2R)-3-phospho-glyceroyl phosphate + NADPH + H(+). It carries out the reaction D-glyceraldehyde 3-phosphate + phosphate + NAD(+) = (2R)-3-phospho-glyceroyl phosphate + NADH + H(+). The protein operates within carbohydrate degradation; glycolysis; pyruvate from D-glyceraldehyde 3-phosphate: step 1/5. Its function is as follows. Possible cargo protein of a type 4B encapsulin nanocompartment. Active in the presence of NAD and NADP, prefers NADP. The chain is Glyceraldehyde-3-phosphate dehydrogenase (gap) from Pyrococcus furiosus (strain ATCC 43587 / DSM 3638 / JCM 8422 / Vc1).